A 349-amino-acid polypeptide reads, in one-letter code: Holliday junction branch migration complex subunit RuvB (349 aa).

The segment at 1-183 is large ATPase domain (RuvB-L); that stretch reads MTDPSRLVTP…FGIPIRLNFY (183 aa). ATP-binding positions include leucine 22, arginine 23, glycine 64, lysine 67, threonine 68, threonine 69, 130–132, arginine 173, tyrosine 183, and arginine 220; that span reads EDF. Position 68 (threonine 68) interacts with Mg(2+). Residues 184–254 are small ATPAse domain (RuvB-S); that stretch reads TIEELESIVT…IADHALGALE (71 aa). Residues 257 to 349 are head domain (RuvB-H); that stretch reads SAGLDAMDRR…GLFGDTGDQE (93 aa). The DNA site is built by arginine 293, arginine 312, and arginine 317.

This sequence belongs to the RuvB family. As to quaternary structure, homohexamer. Forms an RuvA(8)-RuvB(12)-Holliday junction (HJ) complex. HJ DNA is sandwiched between 2 RuvA tetramers; dsDNA enters through RuvA and exits via RuvB. An RuvB hexamer assembles on each DNA strand where it exits the tetramer. Each RuvB hexamer is contacted by two RuvA subunits (via domain III) on 2 adjacent RuvB subunits; this complex drives branch migration. In the full resolvosome a probable DNA-RuvA(4)-RuvB(12)-RuvC(2) complex forms which resolves the HJ.

It localises to the cytoplasm. The enzyme catalyses ATP + H2O = ADP + phosphate + H(+). Functionally, the RuvA-RuvB-RuvC complex processes Holliday junction (HJ) DNA during genetic recombination and DNA repair, while the RuvA-RuvB complex plays an important role in the rescue of blocked DNA replication forks via replication fork reversal (RFR). RuvA specifically binds to HJ cruciform DNA, conferring on it an open structure. The RuvB hexamer acts as an ATP-dependent pump, pulling dsDNA into and through the RuvAB complex. RuvB forms 2 homohexamers on either side of HJ DNA bound by 1 or 2 RuvA tetramers; 4 subunits per hexamer contact DNA at a time. Coordinated motions by a converter formed by DNA-disengaged RuvB subunits stimulates ATP hydrolysis and nucleotide exchange. Immobilization of the converter enables RuvB to convert the ATP-contained energy into a lever motion, pulling 2 nucleotides of DNA out of the RuvA tetramer per ATP hydrolyzed, thus driving DNA branch migration. The RuvB motors rotate together with the DNA substrate, which together with the progressing nucleotide cycle form the mechanistic basis for DNA recombination by continuous HJ branch migration. Branch migration allows RuvC to scan DNA until it finds its consensus sequence, where it cleaves and resolves cruciform DNA. The protein is Holliday junction branch migration complex subunit RuvB of Rhodopseudomonas palustris (strain ATCC BAA-98 / CGA009).